Here is a 276-residue protein sequence, read N- to C-terminus: METWRFIDSGDRDPAYNMALDEALLNWHSEGLIPPTIRFYGWNPPTLSIGYFQKVQKEINMEMVEKHQLGFVRRPTGGRGVLHDKELTYSVIVTEEHPDMPASVTEAYRIISQGILEGFRDLGLDAYFAVPKTEEEKNALKNPRSAVCFDAPSWYELVVEGRKVAGSAQTRQKGVILQHGSIVLDIDEDKLFDLFNYPSERVRERMQRNFKNKAVPINELRDVPLSMEEVKKAFKDGFEKGLSIKLEPYTLTDAEEAEVKQIAKERYETDEWNFRK.

One can recognise a BPL/LPL catalytic domain in the interval 31-246 (GLIPPTIRFY…GFEKGLSIKL (216 aa)). Cys-148 functions as the Acyl-thioester intermediate in the catalytic mechanism.

It belongs to the octanoyltransferase LipM family. In terms of assembly, monomer.

The catalysed reaction is octanoyl-[ACP] + L-lysyl-[protein] = N(6)-octanoyl-L-lysyl-[protein] + holo-[ACP] + H(+). The protein operates within protein modification; protein lipoylation via endogenous pathway; protein N(6)-(lipoyl)lysine from octanoyl-[acyl-carrier-protein]. Catalyzes the transfer of endogenously produced octanoic acid from octanoyl-acyl-carrier-protein onto the lipoyl domain of GcvH, an intermediate carrier during protein lipoylation. The sequence is that of Octanoyltransferase LipM from Halalkalibacterium halodurans (strain ATCC BAA-125 / DSM 18197 / FERM 7344 / JCM 9153 / C-125) (Bacillus halodurans).